The sequence spans 150 residues: Large ribosomal subunit protein bL9 (150 aa).

Belongs to the bacterial ribosomal protein bL9 family.

Its function is as follows. Binds to the 23S rRNA. The sequence is that of Large ribosomal subunit protein bL9 from Burkholderia vietnamiensis (strain G4 / LMG 22486) (Burkholderia cepacia (strain R1808)).